The following is a 78-amino-acid chain: MANIKSAIKRAELNVKQNEKNSAQKSAMRTAIKAFEANPSEELFRAASSAIDKAETKGLIHKNKASRDKARLSTKLAK.

Belongs to the bacterial ribosomal protein bS20 family.

Its function is as follows. Binds directly to 16S ribosomal RNA. This Streptococcus pneumoniae serotype 19F (strain G54) protein is Small ribosomal subunit protein bS20.